The chain runs to 487 residues: 3-ketoacyl-CoA synthase 17 (487 aa).

A run of 2 helical transmembrane segments spans residues 23–43 (LITHFFKLMFLPLMAVLFMNV) and 57–77 (STGFIFVITLAIVGSIVFFMS). Positions 74 to 363 (FFMSRPRSIY…FFATFVAKRL (290 aa)) constitute an FAE domain. Catalysis depends on residues Cys-218, His-297, His-382, His-386, His-415, and Asn-419.

It belongs to the thiolase-like superfamily. Chalcone/stilbene synthases family. As to expression, expressed in flowers.

Its subcellular location is the membrane. The catalysed reaction is a very-long-chain acyl-CoA + malonyl-CoA + H(+) = a very-long-chain 3-oxoacyl-CoA + CO2 + CoA. Its pathway is lipid metabolism; fatty acid biosynthesis. Inhibited by K3 herbicides such as alachlor, allidochlor, anilofos, cafenstrole, fentrazamide and flufenacet. Strongly inhibited by metazachlor. Functionally, active on saturated acyl-CoAs up to C22. Mediates the synthesis of VLCFAs from 20 to 26 carbons in length (e.g. C20:1, C20, C24, C26). The sequence is that of 3-ketoacyl-CoA synthase 17 from Arabidopsis thaliana (Mouse-ear cress).